The primary structure comprises 419 residues: Serine hydroxymethyltransferase (419 aa).

(6S)-5,6,7,8-tetrahydrofolate-binding positions include Leu-121 and 125-127; that span reads GHL. N6-(pyridoxal phosphate)lysine is present on Lys-230. 355 to 357 is a binding site for (6S)-5,6,7,8-tetrahydrofolate; sequence SPF.

The protein belongs to the SHMT family. In terms of assembly, homodimer. It depends on pyridoxal 5'-phosphate as a cofactor.

It is found in the cytoplasm. The enzyme catalyses (6R)-5,10-methylene-5,6,7,8-tetrahydrofolate + glycine + H2O = (6S)-5,6,7,8-tetrahydrofolate + L-serine. It participates in one-carbon metabolism; tetrahydrofolate interconversion. Its pathway is amino-acid biosynthesis; glycine biosynthesis; glycine from L-serine: step 1/1. Functionally, catalyzes the reversible interconversion of serine and glycine with tetrahydrofolate (THF) serving as the one-carbon carrier. This reaction serves as the major source of one-carbon groups required for the biosynthesis of purines, thymidylate, methionine, and other important biomolecules. Also exhibits THF-independent aldolase activity toward beta-hydroxyamino acids, producing glycine and aldehydes, via a retro-aldol mechanism. The polypeptide is Serine hydroxymethyltransferase (Streptococcus equi subsp. zooepidemicus (strain MGCS10565)).